The primary structure comprises 167 residues: uncharacterized protein (167 aa).

This sequence to B.subtilis XkdI.

This is an uncharacterized protein from Bacillus subtilis (strain 168).